Here is a 912-residue protein sequence, read N- to C-terminus: Microtubule-associated protein 10 (912 aa).

Disordered regions lie at residues 31–50 (VAEE…RPSR), 209–239 (KSVE…ADKP), 254–296 (GRAF…QEGT), 335–366 (ASEE…SATG), 443–469 (SPES…NEKS), and 730–859 (RACD…VSSY). The segment covering 211–229 (VEVSPQTWQENQQLQQPDS) has biased composition (polar residues). The segment covering 254–263 (GRAFHSKADS) has biased composition (basic and acidic residues). The span at 266-295 (TDSMENGKTNSDMCSKGSSERSVSPPNQEG) shows a compositional bias: polar residues. Positions 347–362 (ENVNPPTHTNPPEHTN) are enriched in low complexity. The span at 452 to 468 (CKSESKKDKLSVGENEK) shows a compositional bias: basic and acidic residues. Residues 735–768 (SPGTENPKNSQHTSTSSETRLSIRKNSSAKSSIL) are compositionally biased toward polar residues. Residues 796-807 (EASSSDFSSSQW) show a composition bias toward low complexity. The span at 841–859 (GCKSSEKSQSPRTSQVSSY) shows a compositional bias: polar residues.

In terms of assembly, interacts (via middle region) with microtubules.

It is found in the cytoplasm. The protein resides in the cytoskeleton. Its subcellular location is the spindle pole. The protein localises to the microtubule organizing center. It localises to the centrosome. It is found in the midbody. Microtubule-associated protein (MAP) that plays a role in the regulation of cell division; promotes microtubule stability and participates in the organization of the spindle midzone and normal progress of cytokinesis. This Bos taurus (Bovine) protein is Microtubule-associated protein 10 (MAP10).